The sequence spans 197 residues: Ribonuclease HII (197 aa).

The region spanning 14–197 (GIIAGVDEVG…RKNFAPIRIL (184 aa)) is the RNase H type-2 domain. A divalent metal cation-binding residues include aspartate 20, glutamate 21, and aspartate 112.

It belongs to the RNase HII family. Requires Mn(2+) as cofactor. Mg(2+) serves as cofactor.

The protein localises to the cytoplasm. It catalyses the reaction Endonucleolytic cleavage to 5'-phosphomonoester.. Its function is as follows. Endonuclease that specifically degrades the RNA of RNA-DNA hybrids. This is Ribonuclease HII from Wolbachia pipientis subsp. Culex pipiens (strain wPip).